We begin with the raw amino-acid sequence, 240 residues long: Vesicle-associated membrane protein 727 (240 aa).

Topologically, residues 1 to 215 (MSQKGLIYSF…MWLQSLQMKL (215 aa)) are cytoplasmic. In terms of domain architecture, Longin spans 6–133 (LIYSFVAKGT…NLDREFGPIL (128 aa)). The v-SNARE coiled-coil homology domain occupies 149–209 (KLSKLKAQIT…RQLRRKMWLQ (61 aa)). Residues 216–236 (MVAGAVFSFILIVWVVACGGF) form a helical; Anchor for type IV membrane protein membrane-spanning segment. The Vesicular portion of the chain corresponds to 237 to 240 (KCSS).

This sequence belongs to the synaptobrevin family. Interacts with subunits of the class C core vacuole/endosome tethering (CORVET) complex including VPS11, VCL1, VPS18, VPS33, VPS3 and VPS8. As to expression, highly expressed in flowers. Detected in leaves, stems and roots.

It localises to the early endosome membrane. The protein localises to the endosome membrane. Its function is as follows. Involved in the targeting and/or fusion of transport vesicles to their target membrane. This chain is Vesicle-associated membrane protein 727 (VAMP727), found in Arabidopsis thaliana (Mouse-ear cress).